An 834-amino-acid chain; its full sequence is Copper-exporting P-type ATPase (834 aa).

Residues 2-186 (SQTIDLTLDG…TAVATMKRFR (185 aa)) lie on the Cytoplasmic side of the membrane. HMA domains follow at residues 3-64 (QTID…YDAS) and 99-162 (DSQQ…YGAE). Residues Cys14, Cys17, Cys110, and Cys113 each coordinate Cu(+). 2 consecutive short sequence motifs (CXXC motif) follow at residues 14 to 17 (CGHC) and 110 to 113 (CASC). Residues 187–207 (WQAIVALAVGIPVMVWGMIGD) traverse the membrane as a helical segment. The Periplasmic; loop 1 segment spans residues 208–217 (NMMVTADNRS). Residues 218–238 (LWLVIGLITLAVMVFAGGHFY) form a helical membrane-spanning segment. Topologically, residues 239–253 (RSAWKSLLNGAATMD) are cytoplasmic. A helical membrane pass occupies residues 254–274 (TLVALGTGVAWLYSMSVNLWP). The Periplasmic; loop 2 portion of the chain corresponds to 275 to 283 (QWFPMEARH). A helical transmembrane segment spans residues 284 to 304 (LYYEASAMIIGLINLGHMLEA). Residues 305-437 (RARQRSSKAL…EIGQLADKIS (133 aa)) are Cytoplasmic-facing. A helical membrane pass occupies residues 438–458 (AVFVPVVVVIALVSAAIWYFF). Topologically, residues 459-463 (GPAPQ) are periplasmic; loop 3. A helical transmembrane segment spans residues 464–484 (IVYTLVIATTVLIIACPCALG). Topologically, residues 485 to 778 (LATPMSIISG…ATLHNMKQNL (294 aa)) are cytoplasmic. Asp523 acts as the 4-aspartylphosphate intermediate in catalysis. Mg(2+) is bound by residues Asp720 and Asp724. Residues 779–799 (LGAFIYNSIGIPVAAGILWPF) form a helical membrane-spanning segment. A topological domain (periplasmic; loop 4) is located at residue Thr800. Residues 801 to 821 (GTLLNPVVAGAAMALSSITVV) form a helical membrane-spanning segment. The Cytoplasmic segment spans residues 822–834 (SNANRLLRFKPKE).

This sequence belongs to the cation transport ATPase (P-type) (TC 3.A.3) family. Type IB subfamily. As to quaternary structure, copper-exporting P-type ATPase interacts with apo-periplasmic copper chaperone CusF; when CusF is precharged with copper it binds very little CopA. The periplasmic loops of CopA, especially the first half of loop 1, play a large role in binding to CusF.

It is found in the cell inner membrane. The protein resides in the cytoplasm. It carries out the reaction Cu(+)(in) + ATP + H2O = Cu(+)(out) + ADP + phosphate + H(+). Its activity is regulated as follows. Export is inhibited by vanadate. Phosphorylation is inhibited by vanadate and sensitive to KOH and hydroxylamine; it is not inhibited by azide. Phosphorylation is Cu(+) not Cu(2+)-dependent. ATPase activity is inhibited by bathocuproindisulfonate (BCDS), which chelates Cu(+) but not Cu(2+), and stimulated 3-4-fold by Cu(+). ATPase activity is inhibited by Cu(2+) plus DTT or Ag(+). Functionally, exports Cu(+) from the cytoplasm to the periplasm. Binds 2 Cu(+) ions per monomer, which are transferred to periplasmic copper chaperone CusF upon ATP hydrolysis. In vitro an excess of CusF over CopA is required for efficient transfer. May also be involved in silver export. Its function is as follows. mRNA is subject to programmed ribosomal frameshifting which produces a cytoplasmic copper chaperone CopA(Z) that corresponds to the first HMA domain. The soluble form is essential for cell survivial in the presence of CuSO(4); in growth competition experiments between wild-type and a version that prevents expression of CopA(Z) after 50 generations the non-CopA(Z) version is nearly extinct. The first HMA domain (residues 1-70) can be replaced by B.subtilis Cu chaperone CopZ. This is Copper-exporting P-type ATPase from Escherichia coli (strain K12).